Here is a 321-residue protein sequence, read N- to C-terminus: Nitrilase blr3397 (321 aa).

The CN hydrolase domain occupies 10-277; the sequence is YKAAVVQAAS…ETILYADIAL (268 aa). E50 functions as the Proton acceptor in the catalytic mechanism. K137 acts as the Proton donor in catalysis. The Nucleophile role is filled by C171.

This sequence belongs to the carbon-nitrogen hydrolase superfamily. Nitrilase family. As to quaternary structure, homodecamer.

The catalysed reaction is an aliphatic nitrile + 2 H2O = a carboxylate + NH4(+). In terms of biological role, nitrilase that acts on various kinds of nitrile compounds such as aliphatic and aromatic nitriles. Has higher activity toward aliphatic nitriles compared to aromatic nitriles. Among the different substrates tested, has the highest activity toward hydrocinnamonitrile. The protein is Nitrilase blr3397 of Bradyrhizobium diazoefficiens (strain JCM 10833 / BCRC 13528 / IAM 13628 / NBRC 14792 / USDA 110).